A 379-amino-acid chain; its full sequence is Cytochrome b (379 aa).

Transmembrane regions (helical) follow at residues 33-53 (FGSL…FLAM), 77-98 (WLIR…SIHA), 113-133 (WNIG…GYVL), and 178-198 (FFAF…VHLL). 2 residues coordinate heme b: histidine 83 and histidine 97. Residues histidine 182 and histidine 196 each coordinate heme b. Histidine 201 lines the a ubiquinone pocket. The next 4 membrane-spanning stretches (helical) occupy residues 226-246 (IKDL…ALFF), 288-308 (LGGV…PLLN), 320-340 (ITQT…WIGG), and 347-367 (FTMI…ILMP).

Belongs to the cytochrome b family. As to quaternary structure, the cytochrome bc1 complex contains 11 subunits: 3 respiratory subunits (MT-CYB, CYC1 and UQCRFS1), 2 core proteins (UQCRC1 and UQCRC2) and 6 low-molecular weight proteins (UQCRH/QCR6, UQCRB/QCR7, UQCRQ/QCR8, UQCR10/QCR9, UQCR11/QCR10 and a cleavage product of UQCRFS1). This cytochrome bc1 complex then forms a dimer. Requires heme b as cofactor.

It is found in the mitochondrion inner membrane. In terms of biological role, component of the ubiquinol-cytochrome c reductase complex (complex III or cytochrome b-c1 complex) that is part of the mitochondrial respiratory chain. The b-c1 complex mediates electron transfer from ubiquinol to cytochrome c. Contributes to the generation of a proton gradient across the mitochondrial membrane that is then used for ATP synthesis. This is Cytochrome b (MT-CYB) from Thaptomys nigrita (Blackish grass mouse).